Reading from the N-terminus, the 317-residue chain is Melanocyte-stimulating hormone receptor (317 aa).

Residues 1–37 (MPVLGSQRRLLGSLNCTPPATLPLTLAPNRTGPQCLE) are Extracellular-facing. N-linked (GlcNAc...) asparagine glycosylation is present at asparagine 29. A helical membrane pass occupies residues 38–63 (VSIPDGLFLSLGLVSLVENVLVVAAI). Over 64-72 (AKNRNLHSP) the chain is Cytoplasmic. Residues 73–93 (MYYFICCLAMSDLLVSVSNVL) traverse the membrane as a helical segment. Over 94–118 (ETAVMLLLEAGVLATRAAVVQQLDN) the chain is Extracellular. Residues 119-140 (VIDVLICSSMVSSLCFLGAIAV) traverse the membrane as a helical segment. Residues 141–163 (DRYISIFYALRYHSVVTLPRAWR) are Cytoplasmic-facing. A helical membrane pass occupies residues 164 to 183 (IIAAIWVASILTSVLSITYY). Residues 184–191 (NHTVVLLC) are Extracellular-facing. Residues 192-211 (LVGFFIAMLALMAVLYVHML) form a helical membrane-spanning segment. Topologically, residues 212–240 (ARACQHARGIARLQKRQRPIHQGFGLKGA) are cytoplasmic. A helical membrane pass occupies residues 241–266 (ATLTILLGVFFLCWGPFFLHLSLIVL). The Extracellular segment spans residues 267–279 (CPQHPTCGCIFKN). Residues 280-300 (FNLFLALIICNAIVDPLIYAF) form a helical membrane-spanning segment. Topologically, residues 301-317 (RSQELRKTLQEVLQCSW) are cytoplasmic. Cysteine 315 carries S-palmitoyl cysteine lipidation.

This sequence belongs to the G-protein coupled receptor 1 family. In terms of assembly, interacts with MGRN1, but does not undergo MGRN1-mediated ubiquitination; this interaction competes with GNAS-binding and thus inhibits agonist-induced cAMP production. Interacts with OPN3; the interaction results in a decrease in MC1R-mediated cAMP signaling and ultimately a decrease in melanin production in melanocytes.

The protein resides in the cell membrane. Receptor for MSH (alpha, beta and gamma) and ACTH. The activity of this receptor is mediated by G proteins which activate adenylate cyclase. Mediates melanogenesis, the production of eumelanin (black/brown) and phaeomelanin (red/yellow), via regulation of cAMP signaling in melanocytes. The protein is Melanocyte-stimulating hormone receptor (MC1R) of Ovis aries (Sheep).